The following is a 234-amino-acid chain: dTDP-4-amino-4,6-dideoxyglucose formyltransferase (234 aa).

DTDP-4-amino-4,6-dideoxy-alpha-D-glucose is bound by residues asparagine 9 and histidine 62 to lysine 64. Position 65 to 67 (glutamine 65 to phenylalanine 67) interacts with (6R)-10-formyltetrahydrofolate. Histidine 81 serves as the catalytic Proton acceptor. Glycine 90–glutamine 94 contacts dTDP-4-amino-4,6-dideoxy-alpha-D-glucose. 3 residues coordinate (6R)-10-formyltetrahydrofolate: aspartate 112, aspartate 116, and lysine 175. Residue asparagine 209 participates in dTDP-4-amino-4,6-dideoxy-alpha-D-glucose binding.

The protein belongs to the dTDP-Qui4N formyltransferase family. As to quaternary structure, homodimer.

It catalyses the reaction dTDP-4-amino-4,6-dideoxy-alpha-D-glucose + (6R)-10-formyltetrahydrofolate = dTDP-4-formamido-4,6-dideoxy-alpha-D-glucose + (6S)-5,6,7,8-tetrahydrofolate + H(+). Its function is as follows. Sugar N-formyltransferase that catalyzes the conversion of dTDP-4-amino-4,6-dideoxyglucose into dTDP-4-formamido-4,6-dideoxyglucose using N(10)-formyltetrahydrofolate as the carbon source. Plays a role in virulence. This Mycobacterium bovis (strain ATCC BAA-935 / AF2122/97) protein is dTDP-4-amino-4,6-dideoxyglucose formyltransferase.